Here is a 595-residue protein sequence, read N- to C-terminus: Beta-(1--&gt;2)glucan export ATP-binding/permease protein NdvA (595 aa).

5 helical membrane-spanning segments follow: residues 21–41 (FLLI…EPIL), 56–76 (LVTL…YVLV), 129–149 (IWLE…VLVP), 158–178 (LSIV…LVMQ), and 252–272 (ISIV…QLSV). One can recognise an ABC transmembrane type-1 domain in the interval 21-301 (FLLICTANIT…ISGFINLAVS (281 aa)). Positions 335–569 (IQFHHVTYEF…DGHFYKLLKA (235 aa)) constitute an ABC transporter domain. 368 to 375 (GPTGAGKT) serves as a coordination point for ATP.

It belongs to the ABC transporter superfamily. Beta-(1--&gt;2)glucan exporter (TC 3.A.1.108.1) family. Homodimer.

The protein localises to the cell inner membrane. The enzyme catalyses [(1-&gt;2)-beta-D-glucosyl](n)(in) + ATP + H2O = [(1-&gt;2)-beta-D-glucosyl](n)(out) + ADP + phosphate + H(+). In terms of biological role, involved in beta-(1--&gt;2)glucan export. Transmembrane domains (TMD) form a pore in the inner membrane and the ATP-binding domain (NBD) is responsible for energy generation. The polypeptide is Beta-(1--&gt;2)glucan export ATP-binding/permease protein NdvA (Bartonella bacilliformis (strain ATCC 35685 / KC583 / Herrer 020/F12,63)).